Consider the following 168-residue polypeptide: Disulfide bond formation protein B 2 (168 aa).

Residues 1–9 (MSLACLRSF) lie on the Cytoplasmic side of the membrane. A helical membrane pass occupies residues 10-26 (FLPALLASTAVLVASFH). Residues 27–44 (LESVVGLVPCALCFSQRL) are Periplasmic-facing. A disulfide bond links C36 and C39. A helical membrane pass occupies residues 45 to 61 (MLGVYALVCLAALVHSP). At 62 to 67 (AARGRR) the chain is on the cytoplasmic side. A helical membrane pass occupies residues 68-85 (AYAGLALASAFGGALLAG). The Periplasmic segment spans residues 86 to 140 (RHVWLQGDPQVVDGCHLPVEQVLQRPLGEILQMFLLGSPDCVSISWSFLDLTLPE). C100 and C126 are oxidised to a cystine. A helical membrane pass occupies residues 141-159 (WSLLAFLLLAAMPLSWLVA). Residues 160-168 (YRFRKRAMA) lie on the Cytoplasmic side of the membrane.

This sequence belongs to the DsbB family.

It is found in the cell inner membrane. In terms of biological role, required for disulfide bond formation in some periplasmic proteins. Acts by oxidizing the DsbA protein. This chain is Disulfide bond formation protein B 2, found in Pseudomonas entomophila (strain L48).